We begin with the raw amino-acid sequence, 74 residues long: Mitochondrial import receptor subunit TOM6 homolog (74 aa).

The segment covering 1–14 has biased composition (low complexity); it reads MASSGAGVTAAGSA. The interval 1 to 24 is disordered; that stretch reads MASSGAGVTAAGSANEAPEIPDNV. At A2 the chain carries N-acetylalanine.

The protein belongs to the Tom6 family. As to quaternary structure, forms part of the preprotein translocase complex of the outer mitochondrial membrane (TOM complex) which consists of at least 7 different proteins (TOMM5, TOMM6, TOMM7, TOMM20, TOMM22, TOMM40 and TOMM70).

The protein resides in the mitochondrion outer membrane. This Bos taurus (Bovine) protein is Mitochondrial import receptor subunit TOM6 homolog (TOMM6).